The chain runs to 559 residues: MAAVGANATLLTNTKSTVEPVRPLANFPPSVWGDMFLSFSLDNSKMEEYAKAMEKPKQEVRRLILDPTMDSNKKLSLIYVVHRLGLTYMFLKEIEGQLDRLFEEFNLEDYVDVDLHTISINFQAFRHLGYKLPCDVFNKFKNNDSNAFKESIASDVRGLLGLYESAQLRVKGEKILDDASAFAETKLKSLVNTLEGSLAQQVKQALKRPFHQGMPMVEARLYFTNYQEEFSKYDSLLKLAKLHFNYLQLQQKEELRIVSKWWKDMRFQETTPYIRDRVPEIYLWILGLYFEPKYSLARIIATKITLFLVVLDDTYDAYGTLEELRLLTHAINRWDMRAMSDIPEYIRPFYKILLDEYAELEKQLAKEGRLKSVIASKEAFQDIARGYIEEAEWTNSGYVASFPEYMKNGLITSAYNVISKSALVGMGEVVSADALAWYESHPKILQASELISRLQDDVMTYQFERERGQSATGVDSYIKTYGVSEKEAIEELKKMIENAWKDINEGCLKPREVSMDLLAPILNLARMIDVVYRYDDGFTFPGKTLKEYITLLFVDSLPM.

5 residues coordinate (2E,6E)-farnesyl diphosphate: Arg275, Asp312, Asp316, Arg453, and Asp456. Residues Asp312 and Asp316 each contribute to the Mg(2+) site. Positions 312-316 (DDTYD) match the DDXXD motif motif. 3 residues coordinate Mg(2+): Asp456, Thr460, and Glu464.

It belongs to the terpene synthase family. Tpsa subfamily. Monomer. Requires Mg(2+) as cofactor. In terms of tissue distribution, highly expressed in glandular trichomes. Expressed in roots and leaves.

The protein resides in the cytoplasm. The enzyme catalyses (2E,6E)-farnesyl diphosphate = (+)-(R)-germacrene A + diphosphate. It participates in secondary metabolite biosynthesis; terpenoid biosynthesis. Functionally, sesquiterpene synthase involved in the biosynthesis of volatile compounds. Mediates the conversion of (2E,6E)-farnesyl diphosphate (FPP) into (+)-(R)-germacrene A. The protein is Sesquiterpene synthase TPS3 of Xanthium strumarium (Rough cocklebur).